The chain runs to 424 residues: MLFERARGVFPGGVNSPARALKHLAAPLVAKGASGPYLYTDRGRLVDYCMAFGAIILGHAHPRVKNAVTQQLERGWIYALLTEEEVAYAERIKAHVPSIEKMRIVNSGTEATMNAVRLARGYTRRDVIIKFDGNFHGSHDYVLVKAGSGAATWGIPTSAGVPQDVIKLTAVVPYNDVDAFVKTVREIGGRLAAVIVEPIAANYGLIIPDREFIKALKEETERVGALLIFDEVVTGFRVGLSGAQGHFGVRPDLTTLGKVVGGGFPIGIFGGRADVMDMVAPSGPVYNAGTYNAHPVSVAAGLAVIEELEKGEPYKIANEAAERLAKGIEDIAGRAGFDVVVKQIASMFQLYFKRGDVKTPQDVRESDEKLYLKLHELAIKHGVYLAPSQYETNFTSAAHTQDVVETTLAALEKAFTELKSQVGK.

Residue K258 is modified to N6-(pyridoxal phosphate)lysine.

The protein belongs to the class-III pyridoxal-phosphate-dependent aminotransferase family. HemL subfamily. Pyridoxal 5'-phosphate serves as cofactor.

The protein localises to the cytoplasm. It carries out the reaction (S)-4-amino-5-oxopentanoate = 5-aminolevulinate. Its pathway is porphyrin-containing compound metabolism; protoporphyrin-IX biosynthesis; 5-aminolevulinate from L-glutamyl-tRNA(Glu): step 2/2. The polypeptide is Glutamate-1-semialdehyde 2,1-aminomutase (Pyrobaculum islandicum (strain DSM 4184 / JCM 9189 / GEO3)).